The sequence spans 206 residues: AT-hook motif nuclear-localized protein 28 (206 aa).

Disordered regions lie at residues 1–21 (METV…PKAP) and 160–206 (TEEE…PSPY). The segment at residues 5 to 17 (GRPRGRPRGSKNK) is a DNA-binding region (a.T hook). The segment covering 7-18 (PRGRPRGSKNKP) has biased composition (basic residues). The PPC domain occupies 27–173 (DPPMSPYILE…QRNSAEGEEE (147 aa)).

The protein resides in the nucleus. Functionally, transcription factor that specifically binds AT-rich DNA sequences related to the nuclear matrix attachment regions (MARs). This is AT-hook motif nuclear-localized protein 28 from Arabidopsis thaliana (Mouse-ear cress).